The chain runs to 62 residues: UPF0291 protein CLK_1994 (62 aa).

Belongs to the UPF0291 family.

The protein resides in the cytoplasm. The sequence is that of UPF0291 protein CLK_1994 from Clostridium botulinum (strain Loch Maree / Type A3).